The chain runs to 68 residues: MSISARNQLKGKVVGLKKGVITAEVVLEIAGGNKITSIISLDSVEELGVKEGAELTAVIKSTDVMILA.

The region spanning 2 to 68 (SISARNQLKG…IKSTDVMILA (67 aa)) is the Mop domain.

Functionally, binds one mole of molybdenum per mole of protein and contains a pterin. This chain is Molybdenum-pterin-binding protein 1 (mopI), found in Clostridium pasteurianum.